Reading from the N-terminus, the 202-residue chain is Solute carrier family 66 member 3 (202 aa).

The signal sequence occupies residues 1 to 19 (MEAALLGLCNWSTLGVCAA). 4 consecutive transmembrane segments (helical) span residues 33–53 (SARG…LVFL), 64–84 (LTYL…LCIF), 97–117 (IAVL…IDLA), and 171–191 (FTIL…TVTV).

The protein resides in the membrane. The protein is Solute carrier family 66 member 3 of Homo sapiens (Human).